The primary structure comprises 250 residues: Doublesex- and mab-3-related transcription factor dmd-3 (250 aa).

A DNA-binding region (DM 1) is located at residues 19–68; sequence CQRCLNHGLREKRKNHKLSCTFRFCQCSNCIMVERRRQLNSRLMQIDGSR. Over residues 90-100 the composition is skewed to polar residues; it reads CTSQSETTNES. Positions 90–115 are disordered; it reads CTSQSETTNESSGEDKDDGKPKERRP. Residues 102 to 115 are compositionally biased toward basic and acidic residues; it reads GEDKDDGKPKERRP. Residues 117-164 constitute a DNA-binding region (DM 2); that stretch reads CQRCAQHSVVNRLKGHKRACPFRDCFCAKCQVVVERQKLMADQIKLRR. The tract at residues 166–201 is disordered; the sequence is QKREKNNLNSEREAPIAHSMTPSPIDTVTTTTTPTS. Residues 169 to 180 show a composition bias toward basic and acidic residues; sequence EKNNLNSEREAP. A compositionally biased stretch (low complexity) spans 186–201; sequence TPSPIDTVTTTTTPTS.

The protein belongs to the DMRT family. In males, expressed in the tail tip. Specifically, expressed in 15 male-specific muscles of the tail tip called the diagonal muscles, and also in core body muscles of both males and hermaphrodites. In males, expressed in ray A-neurons. In males, expressed in PHC sensory neurons. In males, it is also expressed in the hindgut, B lineage and somatic gonad. In hermaphrodites, expressed in the anchor cell only.

It is found in the nucleus. It localises to the perikaryon. In terms of biological role, transcriptional activator which promotes male-specific development. Acts partially redundantly with the transcription factor mab-3 to coordinate tail tip cell fusion and retraction and thereby regulate male tail tip morphogenesis. This is most likely through the regulation of downstream effectors such as eff-1. May also negatively regulate the expression of other proteins implicated in male tail morphogenesis including nhr-25, vav-1 and arl-1 in tail tip cells. In males, plays a role in the development of ray A-neurons by negatively regulating the activity of the transcription factor ast-1. Plays a role in the male-specific differentiation of PHC sensory neurons into densely connected hub sensory neurons. Plays a role in male mating behavior. The sequence is that of Doublesex- and mab-3-related transcription factor dmd-3 from Caenorhabditis elegans.